The primary structure comprises 299 residues: HTH-type transcriptional regulator ArgP (299 aa).

The 57-residue stretch at 4 to 60 (PDYRALQALDAVIRERGFERAAQKLCITQSAVSQRIKQLENLFGQPLLVRTVPPQPT) folds into the HTH lysR-type domain. Residues 21–40 (FERAAQKLCITQSAVSQRIK) constitute a DNA-binding region (H-T-H motif).

The protein belongs to the LysR transcriptional regulatory family. Homodimer.

Functionally, controls the transcription of genes involved in arginine and lysine metabolism. This chain is HTH-type transcriptional regulator ArgP, found in Proteus mirabilis (strain HI4320).